Here is a 520-residue protein sequence, read N- to C-terminus: GMP synthase [glutamine-hydrolyzing] (520 aa).

A Glutamine amidotransferase type-1 domain is found at 12–205; sequence KIIVLDYGSQ…AISICGARGD (194 aa). C89 acts as the Nucleophile in catalysis. Residues H179 and E181 contribute to the active site. In terms of domain architecture, GMPS ATP-PPase spans 206–395; the sequence is WSMDNFIDME…LGMPEEIVWR (190 aa). Residue 233 to 239 participates in ATP binding; that stretch reads SGGVDSS.

Homodimer.

It carries out the reaction XMP + L-glutamine + ATP + H2O = GMP + L-glutamate + AMP + diphosphate + 2 H(+). It functions in the pathway purine metabolism; GMP biosynthesis; GMP from XMP (L-Gln route): step 1/1. Its function is as follows. Catalyzes the synthesis of GMP from XMP. This is GMP synthase [glutamine-hydrolyzing] from Streptococcus pyogenes serotype M1.